Reading from the N-terminus, the 278-residue chain is DNA oxidative demethylase ALKBH2 (278 aa).

The tract at residues 1 to 49 (MDRFLVKGAVGSLKRRMEQEQTGGGPAGLAEEEGNSKKNPRRAAPGNGV) is disordered. The short motif at 3-7 (RFLVK) is the PCNA-binding element. Residues 101–103 (FGK) and 121–123 (YTF) contribute to the substrate site. The 106-residue stretch at 151 to 256 (TFNFVLINRY…RVNLTFRKIL (106 aa)) folds into the Fe2OG dioxygenase domain. Residues Asn-158, Tyr-160, and His-170 each contribute to the 2-oxoglutarate site. The Fe cation site is built by His-170 and Asp-172. Asp-173 lines the substrate pocket. 4 residues coordinate 2-oxoglutarate: His-235, Arg-247, Thr-251, and Arg-253. His-235 is a Fe cation binding site.

It belongs to the alkB family. Interacts with PCNA homotrimer; this interaction is enhanced during the S-phase of the cell cycle. Interacts with nucleolar proteins NCL, UBTF and NPM1. Interacts with XRCC5-XRCC6 heterodimer. Fe(2+) is required as a cofactor.

It localises to the nucleus. The protein localises to the nucleolus. Its subcellular location is the nucleoplasm. It catalyses the reaction a methylated nucleobase within DNA + 2-oxoglutarate + O2 = a nucleobase within DNA + formaldehyde + succinate + CO2. The catalysed reaction is an N(1)-methyl-2'-deoxyadenosine in double-stranded DNA + 2-oxoglutarate + O2 = a 2'-deoxyadenosine in double-stranded DNA + formaldehyde + succinate + CO2 + H(+). It carries out the reaction an N(1)-methyl-2'-deoxyadenosine in single-stranded DNA + 2-oxoglutarate + O2 = a 2'-deoxyadenosine in single-stranded DNA + formaldehyde + succinate + CO2 + H(+). The enzyme catalyses an N(3)-methyl-2'-deoxycytidine in double-stranded DNA + 2-oxoglutarate + O2 = a 2'-deoxycytidine in double-stranded DNA + formaldehyde + succinate + CO2 + H(+). It catalyses the reaction an N(3)-methyl-2'-deoxycytidine in single-stranded DNA + 2-oxoglutarate + O2 = a 2'-deoxycytidine in single-stranded DNA + formaldehyde + succinate + CO2 + H(+). The catalysed reaction is a 1,N(6)-etheno-2'-deoxyadenosine in double-stranded DNA + 2-oxoglutarate + O2 + H2O = a 2'-deoxyadenosine in double-stranded DNA + glyoxal + succinate + CO2. It carries out the reaction a 1,N(6)-etheno-2'-deoxyadenosine in single-stranded DNA + 2-oxoglutarate + O2 + H2O = a 2'-deoxyadenosine in single-stranded DNA + glyoxal + succinate + CO2. The enzyme catalyses a 3,N(4)-etheno-2'-deoxycytidine in double-stranded DNA + 2-oxoglutarate + O2 + H2O = a 2'-deoxycytidine in double-stranded DNA + glyoxal + succinate + CO2. It catalyses the reaction a 3,N(4)-etheno-2'-deoxycytidine in single-stranded DNA + 2-oxoglutarate + O2 + H2O = a 2'-deoxycytidine in single-stranded DNA + glyoxal + succinate + CO2. The catalysed reaction is a 1,N(2)-etheno-2'-deoxyguanosine in double-stranded DNA + 2-oxoglutarate + O2 + H2O = a 2'-deoxyguanosine in double-stranded DNA + glyoxal + succinate + CO2. Its activity is regulated as follows. Activated by ascorbate and magnesium ions. Dioxygenase that repairs alkylated nucleic acid bases by direct reversal oxidative dealkylation. Can process both double-stranded (ds) and single-stranded (ss) DNA substrates, with a strong preference for dsDNA. Uses molecular oxygen, 2-oxoglutarate and iron as cofactors to oxidize the alkyl groups that are subsequently released as aldehydes, regenerating the undamaged bases. Probes the base pair stability, locates a weakened base pair and flips the damaged base to accommodate the lesion in its active site for efficient catalysis. Repairs monoalkylated bases, specifically N1-methyladenine and N3-methylcytosine, as well as higher order alkyl adducts such as bases modified with exocyclic bridged adducts known as etheno adducts including 1,N6-ethenoadenine, 3,N4-ethenocytosine and 1,N2-ethenoguanine. Acts as a gatekeeper of genomic integrity under alkylation stress. Efficiently repairs alkylated lesions in ribosomal DNA (rDNA). These lesions can cause ss- and dsDNA strand breaks that severely impair rDNA transcription. In a response mechanism to DNA damage, associates with PCNA at replication forks to repair alkylated adducts prior to replication. The protein is DNA oxidative demethylase ALKBH2 (ALKBH2) of Bos taurus (Bovine).